Here is a 297-residue protein sequence, read N- to C-terminus: Nucleotide-binding protein CJA_2809 (297 aa).

8-15 (GLSGSGKT) contacts ATP. Residue 59–62 (DVRN) participates in GTP binding.

This sequence belongs to the RapZ-like family.

Functionally, displays ATPase and GTPase activities. In Cellvibrio japonicus (strain Ueda107) (Pseudomonas fluorescens subsp. cellulosa), this protein is Nucleotide-binding protein CJA_2809.